Here is a 77-residue protein sequence, read N- to C-terminus: Putative neurotoxin 2 (77 aa).

An N-terminal signal peptide occupies residues 1 to 25; sequence MKAFIVILSIAIVLLLIVSIKETSA. Positions 26 to 46 are excised as a propeptide; that stretch reads KDCKQECVKRYTNGDFTNFFK.

It belongs to the scolopendra neurotoxin 3 family. In terms of processing, contains 2 disulfide bonds. Expressed by the venom gland.

Its subcellular location is the secreted. This chain is Putative neurotoxin 2, found in Scolopendra mutilans (Chinese red-headed centipede).